Consider the following 239-residue polypeptide: Tetrahydromethanopterin S-methyltransferase subunit A (239 aa).

The Cytoplasmic segment spans residues 1–215; sequence MANKKSPAAT…EAAMIAKFNS (215 aa). A 5-hydroxybenzimidazolylcob(I)amide-binding site is contributed by His85. Residues 216-238 form a helical membrane-spanning segment; the sequence is GYYNGKIQGIAIGLFLSILVFSL. A topological domain (extracellular) is located at residue Leu239.

The protein belongs to the MtrA family. In terms of assembly, the complex is composed of 8 subunits; MtrA, MtrB, MtrC, MtrD, MtrE, MtrF, MtrG and MtrH. The cofactor is 5-hydroxybenzimidazolylcob(I)amide.

The protein resides in the cell membrane. It carries out the reaction 5-methyl-5,6,7,8-tetrahydromethanopterin + coenzyme M + 2 Na(+)(in) = 5,6,7,8-tetrahydromethanopterin + methyl-coenzyme M + 2 Na(+)(out). The protein operates within one-carbon metabolism; methanogenesis from CO(2); methyl-coenzyme M from 5,10-methylene-5,6,7,8-tetrahydromethanopterin: step 2/2. Part of a complex that catalyzes the formation of methyl-coenzyme M and tetrahydromethanopterin from coenzyme M and methyl-tetrahydromethanopterin. This is an energy-conserving, sodium-ion translocating step. The polypeptide is Tetrahydromethanopterin S-methyltransferase subunit A (Methanococcus maripaludis (strain C7 / ATCC BAA-1331)).